The chain runs to 620 residues: Glutathione-regulated potassium-efflux system protein KefC (620 aa).

Helical transmembrane passes span 4–24, 26–46, 54–74, 90–110, 114–134, 149–169, 178–198, 218–238, 270–290, 294–314, 327–347, and 359–379; these read HTLI…PIAV, LGLG…PWGL, SILH…GLEL, GALQ…FLGL, VAEL…MQAM, FAVL…IPLL, MGAF…VVLL, VFSA…EEVG, GLLL…GTLL, LRIV…LWLI, WFAV…GAAQ, and SLTL…VILN. Positions 399-518 constitute an RCK N-terminal domain; that stretch reads QPRVIIAGFG…AGVEKPERET (120 aa). Residues 597–620 form a disordered region; it reads GWQGTEEGKHTGNMADEPETKPSS.

Belongs to the monovalent cation:proton antiporter 2 (CPA2) transporter (TC 2.A.37) family. KefC subfamily. In terms of assembly, homodimer. Interacts with the regulatory subunit KefF.

The protein resides in the cell inner membrane. Pore-forming subunit of a potassium efflux system that confers protection against electrophiles. Catalyzes K(+)/H(+) antiport. This Escherichia fergusonii (strain ATCC 35469 / DSM 13698 / CCUG 18766 / IAM 14443 / JCM 21226 / LMG 7866 / NBRC 102419 / NCTC 12128 / CDC 0568-73) protein is Glutathione-regulated potassium-efflux system protein KefC.